The sequence spans 40 residues: Photosystem II reaction center protein Y (40 aa).

The chain crosses the membrane as a helical span at residues 5 to 23 (LIVVLAPILLAGGWAVFNI).

It belongs to the PsbY family. PSII is composed of 1 copy each of membrane proteins PsbA, PsbB, PsbC, PsbD, PsbE, PsbF, PsbH, PsbI, PsbJ, PsbK, PsbL, PsbM, PsbT, PsbX, PsbY, PsbZ, Psb30/Ycf12, peripheral proteins PsbO, CyanoQ (PsbQ), PsbU, PsbV and a large number of cofactors. It forms dimeric complexes.

It localises to the cellular thylakoid membrane. Loosely associated component of the core of photosystem II (PSII), it is not always seen in crystals. PSII is a light-driven water plastoquinone oxidoreductase, using light energy to abstract electrons from H(2)O, generating a proton gradient subsequently used for ATP formation. This is Photosystem II reaction center protein Y from Synechococcus elongatus (strain ATCC 33912 / PCC 7942 / FACHB-805) (Anacystis nidulans R2).